The following is a 147-amino-acid chain: Lysozyme C (147 aa).

An N-terminal signal peptide occupies residues 1–18 (MRSLLVLVLCFLPLAALG). The region spanning 19 to 147 (KVYGRCELAA…VNAWIRGCRL (129 aa)) is the C-type lysozyme domain. 4 cysteine pairs are disulfide-bonded: cysteine 24-cysteine 145, cysteine 48-cysteine 133, cysteine 82-cysteine 98, and cysteine 94-cysteine 112. Active-site residues include glutamate 53 and aspartate 70.

Belongs to the glycosyl hydrolase 22 family. Monomer.

It localises to the secreted. It carries out the reaction Hydrolysis of (1-&gt;4)-beta-linkages between N-acetylmuramic acid and N-acetyl-D-glucosamine residues in a peptidoglycan and between N-acetyl-D-glucosamine residues in chitodextrins.. In terms of biological role, lysozymes have primarily a bacteriolytic function; those in tissues and body fluids are associated with the monocyte-macrophage system and enhance the activity of immunoagents. The chain is Lysozyme C (LYZ) from Coturnix japonica (Japanese quail).